The chain runs to 256 residues: Type III pantothenate kinase (256 aa).

6 to 13 provides a ligand contact to ATP; that stretch reads DAGNSRIK. Substrate is bound by residues Y90 and 97-100; that span reads GSDR. The Proton acceptor role is filled by D99. ATP is bound at residue T123. T187 is a substrate binding site.

The protein belongs to the type III pantothenate kinase family. Homodimer. NH4(+) is required as a cofactor. K(+) serves as cofactor.

The protein localises to the cytoplasm. The enzyme catalyses (R)-pantothenate + ATP = (R)-4'-phosphopantothenate + ADP + H(+). Its pathway is cofactor biosynthesis; coenzyme A biosynthesis; CoA from (R)-pantothenate: step 1/5. In terms of biological role, catalyzes the phosphorylation of pantothenate (Pan), the first step in CoA biosynthesis. The polypeptide is Type III pantothenate kinase (Burkholderia mallei (strain ATCC 23344)).